We begin with the raw amino-acid sequence, 640 residues long: Serine/threonine-protein phosphatase with EF-hands 1 (640 aa).

An IQ domain is found at Val16 to Phe45. A catalytic region spans residues Ile122–Ser445. Residues Asp173, His175, Asp202, and Asn234 each contribute to the Mn(2+) site. The Proton donor role is filled by His235. 2 residues coordinate Mn(2+): His286 and His393. EF-hand domains follow at residues Ala473–Leu508, Arg556–His591, and Ile596–Tyr631. Residues Asp569, Asp571, Ser573, Glu580, Asp609, Asn611, Asp613, Asn615, and Glu620 each contribute to the Ca(2+) site.

The protein belongs to the PPP phosphatase family. Mn(2+) serves as cofactor. It depends on Mg(2+) as a cofactor.

It carries out the reaction O-phospho-L-seryl-[protein] + H2O = L-seryl-[protein] + phosphate. The catalysed reaction is O-phospho-L-threonyl-[protein] + H2O = L-threonyl-[protein] + phosphate. With respect to regulation, activated by calcium. In terms of biological role, may have a role in the recovery or adaptation response of photoreceptors. May have a role in development. The chain is Serine/threonine-protein phosphatase with EF-hands 1 (Ppef1) from Rattus norvegicus (Rat).